Reading from the N-terminus, the 208-residue chain is Small ribosomal subunit protein uS4 (208 aa).

The 61-residue stretch at 98–158 (RRLDNVVYRL…EKSRGQLRIK (61 aa)) folds into the S4 RNA-binding domain.

This sequence belongs to the universal ribosomal protein uS4 family. Part of the 30S ribosomal subunit. Contacts protein S5. The interaction surface between S4 and S5 is involved in control of translational fidelity.

Its function is as follows. One of the primary rRNA binding proteins, it binds directly to 16S rRNA where it nucleates assembly of the body of the 30S subunit. With S5 and S12 plays an important role in translational accuracy. The sequence is that of Small ribosomal subunit protein uS4 from Magnetococcus marinus (strain ATCC BAA-1437 / JCM 17883 / MC-1).